Consider the following 45-residue polypeptide: Osteocalcin (45 aa).

The region spanning 1–44 (AGTAXGDLTPFQLESLREVCEVNLACEHMADTXGIVAAYTAYYG) is the Gla domain. Ca(2+) is bound by residues Glu14, Glu18, Glu21, and Glu27. Glu14, Glu18, and Glu21 each carry 4-carboxyglutamate. Cys20 and Cys26 form a disulfide bridge.

This sequence belongs to the osteocalcin/matrix Gla protein family. Gamma-carboxyglutamate residues are formed by vitamin K dependent carboxylation by GGCX. These residues are essential for the binding of calcium.

It is found in the secreted. The carboxylated form is one of the main organic components of the bone matrix, which constitutes 1-2% of the total bone protein. The carboxylated form binds strongly to apatite and calcium. The chain is Osteocalcin (bglap) from Danio rerio (Zebrafish).